The chain runs to 402 residues: Phosphoglycerate kinase (402 aa).

Substrate-binding positions include 24–26 (DFN), Arg40, 63–66 (HFGR), Arg122, and Arg155. Residues Lys206, Gly297, Glu328, and 357 to 360 (GGDS) each bind ATP.

The protein belongs to the phosphoglycerate kinase family. As to quaternary structure, monomer.

The protein resides in the cytoplasm. The catalysed reaction is (2R)-3-phosphoglycerate + ATP = (2R)-3-phospho-glyceroyl phosphate + ADP. It functions in the pathway carbohydrate degradation; glycolysis; pyruvate from D-glyceraldehyde 3-phosphate: step 2/5. The protein is Phosphoglycerate kinase of Prochlorococcus marinus (strain MIT 9211).